The sequence spans 650 residues: Acetyl-coenzyme A synthetase (650 aa).

Residues 191 to 194, threonine 311, and asparagine 335 contribute to the CoA site; that span reads RGGR. Residues 387 to 389, 411 to 416, aspartate 500, and arginine 515 each bind ATP; these read GEP and DTWWQT. Serine 523 is a CoA binding site. Arginine 526 provides a ligand contact to ATP. 3 residues coordinate Mg(2+): valine 537, histidine 539, and valine 542. Position 584 (arginine 584) interacts with CoA. N6-acetyllysine is present on lysine 609.

It belongs to the ATP-dependent AMP-binding enzyme family. Requires Mg(2+) as cofactor. Post-translationally, acetylated. Deacetylation by the SIR2-homolog deacetylase activates the enzyme.

It catalyses the reaction acetate + ATP + CoA = acetyl-CoA + AMP + diphosphate. Its function is as follows. Catalyzes the conversion of acetate into acetyl-CoA (AcCoA), an essential intermediate at the junction of anabolic and catabolic pathways. AcsA undergoes a two-step reaction. In the first half reaction, AcsA combines acetate with ATP to form acetyl-adenylate (AcAMP) intermediate. In the second half reaction, it can then transfer the acetyl group from AcAMP to the sulfhydryl group of CoA, forming the product AcCoA. This Shewanella amazonensis (strain ATCC BAA-1098 / SB2B) protein is Acetyl-coenzyme A synthetase.